We begin with the raw amino-acid sequence, 1183 residues long: DNA-directed RNA polymerase subunit beta (1183 aa).

The protein belongs to the RNA polymerase beta chain family. In terms of assembly, the RNAP catalytic core consists of 2 alpha, 1 beta, 1 beta' and 1 omega subunit. When a sigma factor is associated with the core the holoenzyme is formed, which can initiate transcription.

The catalysed reaction is RNA(n) + a ribonucleoside 5'-triphosphate = RNA(n+1) + diphosphate. Functionally, DNA-dependent RNA polymerase catalyzes the transcription of DNA into RNA using the four ribonucleoside triphosphates as substrates. This chain is DNA-directed RNA polymerase subunit beta, found in Staphylococcus aureus (strain Mu50 / ATCC 700699).